The primary structure comprises 270 residues: NAD kinase (270 aa).

The active-site Proton acceptor is the Asp-49. NAD(+) contacts are provided by residues 49–50, Arg-54, 126–127, Arg-152, Asp-154, 165–170, Ala-189, and Gln-227; these read DG, NE, and TAYNKS.

It belongs to the NAD kinase family. A divalent metal cation serves as cofactor.

The protein localises to the cytoplasm. The enzyme catalyses NAD(+) + ATP = ADP + NADP(+) + H(+). Its function is as follows. Involved in the regulation of the intracellular balance of NAD and NADP, and is a key enzyme in the biosynthesis of NADP. Catalyzes specifically the phosphorylation on 2'-hydroxyl of the adenosine moiety of NAD to yield NADP. This is NAD kinase from Lactococcus lactis subsp. cremoris (strain SK11).